We begin with the raw amino-acid sequence, 178 residues long: ATP synthase subunit delta (178 aa).

The protein belongs to the ATPase delta chain family. As to quaternary structure, F-type ATPases have 2 components, F(1) - the catalytic core - and F(0) - the membrane proton channel. F(1) has five subunits: alpha(3), beta(3), gamma(1), delta(1), epsilon(1). F(0) has three main subunits: a(1), b(2) and c(10-14). The alpha and beta chains form an alternating ring which encloses part of the gamma chain. F(1) is attached to F(0) by a central stalk formed by the gamma and epsilon chains, while a peripheral stalk is formed by the delta and b chains.

The protein resides in the cell inner membrane. Its function is as follows. F(1)F(0) ATP synthase produces ATP from ADP in the presence of a proton or sodium gradient. F-type ATPases consist of two structural domains, F(1) containing the extramembraneous catalytic core and F(0) containing the membrane proton channel, linked together by a central stalk and a peripheral stalk. During catalysis, ATP synthesis in the catalytic domain of F(1) is coupled via a rotary mechanism of the central stalk subunits to proton translocation. Functionally, this protein is part of the stalk that links CF(0) to CF(1). It either transmits conformational changes from CF(0) to CF(1) or is implicated in proton conduction. The sequence is that of ATP synthase subunit delta from Acinetobacter baumannii (strain AB307-0294).